Here is a 430-residue protein sequence, read N- to C-terminus: Meiotically up-regulated gene 132 protein (430 aa).

This sequence belongs to the UPF0300 family.

It is found in the mitochondrion. In terms of biological role, has a role in meiosis. The polypeptide is Meiotically up-regulated gene 132 protein (mug132) (Schizosaccharomyces pombe (strain 972 / ATCC 24843) (Fission yeast)).